The sequence spans 147 residues: MVHWTAEEKQIITGLWGKVNVADCGAEALARLLIVYPWTQRFFSSFGNLSSPTAILGNPMVRAHGKKVLTSFGDAVKNLDNIKNTFAQLSELHCDKLHVDPENFRLLGDILIVVLAAHFSKEFTPECQAAWQKLVRVVAHALARKYH.

In terms of domain architecture, Globin spans 3–147 (HWTAEEKQII…VAHALARKYH (145 aa)). Heme b-binding residues include H64 and H93.

As to quaternary structure, heterotetramer of two alpha (or alpha-D) and two beta chains. In terms of tissue distribution, red blood cells.

Its function is as follows. Involved in oxygen transport from the lung to the various peripheral tissues. The beta chain is a component of adult hemoglobin A and D. In Aythya fuligula (Tufted duck), this protein is Hemoglobin subunit beta.